Consider the following 368-residue polypeptide: MKGLQVAFKQTLGHVVFDIELQLPSKGVSAIFGRSGAGKTSIINVISGLTQPEQGRIALNSDVLFDSVLGINVPVHQRNIGYVFQDSRLFPHYHVEGNLKYGVKQYDAEMFDKVVALLALQPLLKRYPASLSGGEKQRVAIGRALLSSPKILLMDEPLASLDMPRKKEVLPFLEKLSESFEIPIVYVTHSLQEILRLADHLTVLDRGQIVASGVLSEVWSSQAMRPWQSFSEQSTLFNANIAEQHPQYALTRVMLSSTASLWVQKIDAPLGSDIRLQVRANDVSITLVQPQKTSIRNIIEAKVERVEKRHPAEDKESIAVKLALTQDCFLWATITPWALADLNLKQGDRVFAQIKGVSVTQRDIALTH.

An ABC transporter domain is found at 1-231 (MKGLQVAFKQ…QAMRPWQSFS (231 aa)). Residue 33 to 40 (GRSGAGKT) participates in ATP binding. One can recognise a Mop domain in the interval 292–363 (KTSIRNIIEA…IKGVSVTQRD (72 aa)).

This sequence belongs to the ABC transporter superfamily. Molybdate importer (TC 3.A.1.8) family. In terms of assembly, the complex is composed of two ATP-binding proteins (ModC), two transmembrane proteins (ModB) and a solute-binding protein (ModA).

The protein resides in the cell inner membrane. The catalysed reaction is molybdate(out) + ATP + H2O = molybdate(in) + ADP + phosphate + H(+). Functionally, part of the ABC transporter complex ModABC involved in molybdenum import. Responsible for energy coupling to the transport system. This is Molybdenum import ATP-binding protein ModC from Vibrio vulnificus (strain YJ016).